The sequence spans 351 residues: uncharacterized protein (351 aa).

Mn(2+) is bound by residues aspartate 215, aspartate 226, histidine 290, glutamate 319, and glutamate 333.

Belongs to the peptidase M24B family. It depends on Mn(2+) as a cofactor.

This is an uncharacterized protein from Staphylococcus aureus (strain MW2).